The sequence spans 336 residues: Nuclear egress protein 2 (336 aa).

Residues 1 to 315 (MASPEERLLD…AWRYSWRATP (315 aa)) lie on the Perinuclear space side of the membrane. Disordered regions lie at residues 193–221 (RSGQ…GCLG) and 277–297 (RTRE…VPPE). Basic residues predominate over residues 277 to 288 (RTRETRRMRGSH). A helical membrane pass occupies residues 316 to 333 (YLARVLAVTAVALLLMFL). Over 334-336 (RWT) the chain is Nuclear.

Belongs to the herpesviridae NEC2 protein family. As to quaternary structure, forms a heterodimeric viral nuclear egress complex (NEC) with NEC1. Interacts with host IKBKE; this interaction inhibits host IKBKE kinase activity and IRF3 nuclear translocation. Post-translationally, phosphorylated.

Its subcellular location is the host nucleus inner membrane. It is found in the host cytoplasm. It localises to the host perinuclear region. Plays an essential role in virion nuclear egress, the first step of virion release from infected cell. Within the host nucleus, NEC1 interacts with the newly formed capsid through the vertexes and directs it to the inner nuclear membrane by associating with NEC2. Induces the budding of the capsid at the inner nuclear membrane as well as its envelopment into the perinuclear space. There, the NEC1/NEC2 complex promotes the fusion of the enveloped capsid with the outer nuclear membrane and the subsequent release of the viral capsid into the cytoplasm where it will reach the secondary budding sites in the host Golgi or trans-Golgi network. Inhibits host IKBKE and IRF3, thereby impairing type I IFN signaling. The chain is Nuclear egress protein 2 from Homo sapiens (Human).